The following is a 206-amino-acid chain: MEEYEKFRALASKEAEKRGYLFQEAQHAYSAGNKAKAHELSQEGKLCGERMENYNRQAASAIYLYKNSQCNPDEIDLHGLYIDEAVQAVQQRIENCIRRGDNHLHIIVGRGNHSANHVEKLRPAIVRMLEQQSIKYNSEVNEGRIYVYLPSATSPIQPNFNCIQEPQEAYSRPQHSTLTDQVEPEKIVEEIATNCFPRLKTCCAIM.

The 76-residue stretch at 75–150 (IDLHGLYIDE…NEGRIYVYLP (76 aa)) folds into the Smr domain.

It is found in the cytoplasm. The protein resides in the nucleus. This is Smr domain-containing protein C11H11.03c from Schizosaccharomyces pombe (strain 972 / ATCC 24843) (Fission yeast).